A 769-amino-acid chain; its full sequence is Phosphatidylinositol 4-phosphate 5-kinase 8 (769 aa).

MORN repeat units follow at residues 16-38 (YSGQ…DGII), 39-61 (YEGD…SGAK), 62-84 (YEGD…DGSV), 85-107 (YAGA…NSDV), 108-130 (YDGS…NGNR), 131-153 (FIGN…NGDL), 154-176 (FNGF…DGGF), and 177-198 (YFGT…AGSK). Residues 266-289 (PPRDFMHHGPSSKSARSVDSGQSE) are disordered. Residues 276 to 288 (SSKSARSVDSGQS) are compositionally biased toward polar residues. Positions 344-765 (WNHYLMLNLQ…RFIDFLLKVF (422 aa)) constitute a PIPK domain. An activation loop region spans residues 725 to 746 (YNMKKKVEHTCKSMKYDPMTIS).

The catalysed reaction is a 1,2-diacyl-sn-glycero-3-phospho-(1D-myo-inositol 4-phosphate) + ATP = a 1,2-diacyl-sn-glycero-3-phospho-(1D-myo-inositol-4,5-bisphosphate) + ADP + H(+). The protein is Phosphatidylinositol 4-phosphate 5-kinase 8 (PIP5K8) of Arabidopsis thaliana (Mouse-ear cress).